Here is a 266-residue protein sequence, read N- to C-terminus: Electron transfer flavoprotein subunit beta (266 aa).

The protein belongs to the ETF beta-subunit/FixA family. As to quaternary structure, heterodimer of an alpha and a beta subunit. FAD is required as a cofactor. Requires AMP as cofactor.

In terms of biological role, the electron transfer flavoprotein serves as a specific electron acceptor for other dehydrogenases. It transfers the electrons to the main respiratory chain via ETF-ubiquinone oxidoreductase (ETF dehydrogenase). In Mycobacterium leprae (strain TN), this protein is Electron transfer flavoprotein subunit beta (etfB).